A 109-amino-acid polypeptide reads, in one-letter code: MTETEFLALVDQVLDSIESQADDWAAGLDVDIEATRSGNVLTLVFEDGTQVVVNVQAAMQELWVAARSGGFHYRYDGQHWNDTRGGPRLPDALSQICSEAAGVPVSVRL.

Belongs to the frataxin family.

Functionally, involved in iron-sulfur (Fe-S) cluster assembly. May act as a regulator of Fe-S biogenesis. The chain is Iron-sulfur cluster assembly protein CyaY from Bordetella pertussis (strain Tohama I / ATCC BAA-589 / NCTC 13251).